The primary structure comprises 608 residues: MLRTHLSGELRKENAGQSVTLTGWVNRRRDHGGVIFIDLRDRTGIAQVVFRNEDVAERAHALRSEFVLRVTGVVEERPEGSQNPNLASGDIEVSVTEFEVLNESAPLPFQIEDSSSAGEVGEETRLKYRYLDLRRPVQANALRLRSAANKAARTVLDSHDFTEIETPTLTRSTPEGARDFLVPARLRPGTFYALPQSPQLFKQLLQVAGMERYYQIARCYRDEDFRADRQPEFTQLDVEMSFVDQDDVIALGEEIISEVWKLIGYEIKTPIPRMTYADAMRRYGSDKPDLRFDIEITECTEFFQDTTFRVFKNEYVGAVVMTGGASQPRRQLDAWQEWAKQRGAKGLAYILVGEDGELSGPVAKNITDAERAGIAAHVGAQPGDCIFFAAGDTKSSLALLGAARGEIAKKLDLIKEGDWAFTWIVDAPMFEPAADATASGDVALGNSKWTAVHHAFTSPKPEFLDNFDTNPGDALAYAYDIVCNGNEIGGGSIRIHQRDVQERVFEVMGITGEEAREKFGFLLDAFAFGAPPHGGIAFGWDRIVSLLGGFDSIRDVIAFPKSGGGIDPLTDAPAAITPQQRKEAGIDAKPKPKAEAQAEAQAEESAEK.

Residue E175 coordinates L-aspartate. An aspartate region spans residues 199–202 (QLFK). Position 221 (R221) interacts with L-aspartate. ATP is bound by residues 221-223 (RDE) and Q230. H453 provides a ligand contact to L-aspartate. Residue E487 participates in ATP binding. Position 494 (R494) interacts with L-aspartate. 539-542 (GWDR) contacts ATP. The tract at residues 566 to 608 (IDPLTDAPAAITPQQRKEAGIDAKPKPKAEAQAEAQAEESAEK) is disordered. The span at 580–596 (QRKEAGIDAKPKPKAEA) shows a compositional bias: basic and acidic residues.

It belongs to the class-II aminoacyl-tRNA synthetase family. Type 1 subfamily. As to quaternary structure, homodimer.

It is found in the cytoplasm. It catalyses the reaction tRNA(Asx) + L-aspartate + ATP = L-aspartyl-tRNA(Asx) + AMP + diphosphate. Functionally, aspartyl-tRNA synthetase with relaxed tRNA specificity since it is able to aspartylate not only its cognate tRNA(Asp) but also tRNA(Asn). Reaction proceeds in two steps: L-aspartate is first activated by ATP to form Asp-AMP and then transferred to the acceptor end of tRNA(Asp/Asn). In Corynebacterium glutamicum (strain ATCC 13032 / DSM 20300 / JCM 1318 / BCRC 11384 / CCUG 27702 / LMG 3730 / NBRC 12168 / NCIMB 10025 / NRRL B-2784 / 534), this protein is Aspartate--tRNA(Asp/Asn) ligase.